Here is a 58-residue protein sequence, read N- to C-terminus: Large ribosomal subunit protein uL30 (58 aa).

Belongs to the universal ribosomal protein uL30 family. As to quaternary structure, part of the 50S ribosomal subunit.

This chain is Large ribosomal subunit protein uL30, found in Cytophaga hutchinsonii (strain ATCC 33406 / DSM 1761 / CIP 103989 / NBRC 15051 / NCIMB 9469 / D465).